The chain runs to 326 residues: Aspartate carbamoyltransferase catalytic subunit (326 aa).

Residues R65 and T66 each coordinate carbamoyl phosphate. K93 serves as a coordination point for L-aspartate. Residues R115, H143, and Q146 each coordinate carbamoyl phosphate. The L-aspartate site is built by R176 and R230. Positions 271 and 272 each coordinate carbamoyl phosphate.

It belongs to the aspartate/ornithine carbamoyltransferase superfamily. ATCase family. As to quaternary structure, heterododecamer (2C3:3R2) of six catalytic PyrB chains organized as two trimers (C3), and six regulatory PyrI chains organized as three dimers (R2).

The enzyme catalyses carbamoyl phosphate + L-aspartate = N-carbamoyl-L-aspartate + phosphate + H(+). It participates in pyrimidine metabolism; UMP biosynthesis via de novo pathway; (S)-dihydroorotate from bicarbonate: step 2/3. Its function is as follows. Catalyzes the condensation of carbamoyl phosphate and aspartate to form carbamoyl aspartate and inorganic phosphate, the committed step in the de novo pyrimidine nucleotide biosynthesis pathway. This chain is Aspartate carbamoyltransferase catalytic subunit, found in Mesorhizobium japonicum (strain LMG 29417 / CECT 9101 / MAFF 303099) (Mesorhizobium loti (strain MAFF 303099)).